Consider the following 379-residue polypeptide: Elongation factor Ts, mitochondrial (379 aa).

A mitochondrion-targeting transit peptide spans 1-45; it reads MALYRTARRPLQMMLFSRLGNPEQNYSSWARKDASQSAFGMFVRL.

The protein belongs to the EF-Ts family.

The protein resides in the mitochondrion. Its function is as follows. Associates with the EF-Tu.GDP complex and induces the exchange of GDP to GTP. It remains bound to the aminoacyl-tRNA.EF-Tu.GTP complex up to the GTP hydrolysis stage on the ribosome. In Ricinus communis (Castor bean), this protein is Elongation factor Ts, mitochondrial.